Reading from the N-terminus, the 283-residue chain is Thymidylate synthase (283 aa).

A dUMP-binding site is contributed by R22. C160 acts as the Nucleophile in catalysis. DUMP contacts are provided by residues 180–183 (RSCD), N191, and 221–223 (HIY). D183 serves as a coordination point for (6R)-5,10-methylene-5,6,7,8-tetrahydrofolate. S282 lines the (6R)-5,10-methylene-5,6,7,8-tetrahydrofolate pocket.

The protein belongs to the thymidylate synthase family. Bacterial-type ThyA subfamily. As to quaternary structure, homodimer.

Its subcellular location is the cytoplasm. The enzyme catalyses dUMP + (6R)-5,10-methylene-5,6,7,8-tetrahydrofolate = 7,8-dihydrofolate + dTMP. The protein operates within pyrimidine metabolism; dTTP biosynthesis. In terms of biological role, catalyzes the reductive methylation of 2'-deoxyuridine-5'-monophosphate (dUMP) to 2'-deoxythymidine-5'-monophosphate (dTMP) while utilizing 5,10-methylenetetrahydrofolate (mTHF) as the methyl donor and reductant in the reaction, yielding dihydrofolate (DHF) as a by-product. This enzymatic reaction provides an intracellular de novo source of dTMP, an essential precursor for DNA biosynthesis. The polypeptide is Thymidylate synthase (Photobacterium profundum (strain SS9)).